A 433-amino-acid chain; its full sequence is Glutamate-1-semialdehyde 2,1-aminomutase (433 aa).

Residue Lys-271 is modified to N6-(pyridoxal phosphate)lysine.

This sequence belongs to the class-III pyridoxal-phosphate-dependent aminotransferase family. HemL subfamily. Homodimer. The cofactor is pyridoxal 5'-phosphate.

The protein resides in the cytoplasm. It carries out the reaction (S)-4-amino-5-oxopentanoate = 5-aminolevulinate. The protein operates within porphyrin-containing compound metabolism; protoporphyrin-IX biosynthesis; 5-aminolevulinate from L-glutamyl-tRNA(Glu): step 2/2. It participates in porphyrin-containing compound metabolism; chlorophyll biosynthesis. This Prochlorococcus marinus subsp. pastoris (strain CCMP1986 / NIES-2087 / MED4) protein is Glutamate-1-semialdehyde 2,1-aminomutase.